The following is a 136-amino-acid chain: NADPH-dependent 7-cyano-7-deazaguanine reductase (136 aa).

The active-site Thioimide intermediate is the C50. D57 functions as the Proton donor in the catalytic mechanism. Residues 72–74 and 91–92 each bind substrate; these read YEL and HE.

This sequence belongs to the GTP cyclohydrolase I family. QueF type 1 subfamily.

The protein localises to the cytoplasm. It carries out the reaction 7-aminomethyl-7-carbaguanine + 2 NADP(+) = 7-cyano-7-deazaguanine + 2 NADPH + 3 H(+). It functions in the pathway tRNA modification; tRNA-queuosine biosynthesis. In terms of biological role, catalyzes the NADPH-dependent reduction of 7-cyano-7-deazaguanine (preQ0) to 7-aminomethyl-7-deazaguanine (preQ1). This chain is NADPH-dependent 7-cyano-7-deazaguanine reductase, found in Prochlorococcus marinus (strain MIT 9515).